We begin with the raw amino-acid sequence, 350 residues long: uncharacterized protein (350 aa).

May play a role in septum formation. This is an uncharacterized protein from Mycobacterium tuberculosis (strain CDC 1551 / Oshkosh).